Reading from the N-terminus, the 124-residue chain is Putative iron-sulfur cluster insertion protein ErpA (124 aa).

Iron-sulfur cluster is bound by residues C49, C113, and C115.

Belongs to the HesB/IscA family. As to quaternary structure, homodimer. Iron-sulfur cluster serves as cofactor.

Functionally, required for insertion of 4Fe-4S clusters. In Acidovorax sp. (strain JS42), this protein is Putative iron-sulfur cluster insertion protein ErpA.